Here is a 345-residue protein sequence, read N- to C-terminus: Probable dual-specificity RNA methyltransferase RlmN (345 aa).

Glutamate 90 (proton acceptor) is an active-site residue. The Radical SAM core domain maps to 96-327; it reads QSYGNSVCVT…CIVRREFGHD (232 aa). Cysteine 103 and cysteine 332 are disulfide-bonded. [4Fe-4S] cluster is bound by residues cysteine 110, cysteine 114, and cysteine 117. S-adenosyl-L-methionine is bound by residues 160–161, serine 192, 215–217, and asparagine 291; these read GE and SLH. Cysteine 332 serves as the catalytic S-methylcysteine intermediate.

It belongs to the radical SAM superfamily. RlmN family. [4Fe-4S] cluster is required as a cofactor.

It is found in the cytoplasm. The catalysed reaction is adenosine(2503) in 23S rRNA + 2 reduced [2Fe-2S]-[ferredoxin] + 2 S-adenosyl-L-methionine = 2-methyladenosine(2503) in 23S rRNA + 5'-deoxyadenosine + L-methionine + 2 oxidized [2Fe-2S]-[ferredoxin] + S-adenosyl-L-homocysteine. It catalyses the reaction adenosine(37) in tRNA + 2 reduced [2Fe-2S]-[ferredoxin] + 2 S-adenosyl-L-methionine = 2-methyladenosine(37) in tRNA + 5'-deoxyadenosine + L-methionine + 2 oxidized [2Fe-2S]-[ferredoxin] + S-adenosyl-L-homocysteine. Specifically methylates position 2 of adenine 2503 in 23S rRNA and position 2 of adenine 37 in tRNAs. This is Probable dual-specificity RNA methyltransferase RlmN from Spiroplasma citri.